A 266-amino-acid polypeptide reads, in one-letter code: Glucosamine-6-phosphate deaminase (266 aa).

Catalysis depends on aspartate 72, which acts as the Proton acceptor; for enolization step. Aspartate 141 acts as the For ring-opening step in catalysis. The active-site Proton acceptor; for ring-opening step is histidine 143. The active-site For ring-opening step is the glutamate 148.

This sequence belongs to the glucosamine/galactosamine-6-phosphate isomerase family. NagB subfamily. As to quaternary structure, homohexamer.

The enzyme catalyses alpha-D-glucosamine 6-phosphate + H2O = beta-D-fructose 6-phosphate + NH4(+). The protein operates within amino-sugar metabolism; N-acetylneuraminate degradation; D-fructose 6-phosphate from N-acetylneuraminate: step 5/5. Its activity is regulated as follows. Allosterically activated by N-acetylglucosamine 6-phosphate (GlcNAc6P). Functionally, catalyzes the reversible isomerization-deamination of glucosamine 6-phosphate (GlcN6P) to form fructose 6-phosphate (Fru6P) and ammonium ion. This is Glucosamine-6-phosphate deaminase from Vibrio cholerae serotype O1 (strain ATCC 39541 / Classical Ogawa 395 / O395).